A 328-amino-acid chain; its full sequence is BURP domain-containing protein 11 (328 aa).

A BURP domain is found at 74-318; it reads FFFRDALRPG…TKLSIVWVPR (245 aa).

As to expression, expressed in roots.

The chain is BURP domain-containing protein 11 (BURP11) from Oryza sativa subsp. japonica (Rice).